Here is a 106-residue protein sequence, read N- to C-terminus: Toxin-like structure LSTX-D8 (106 aa).

A signal peptide spans Met1–Ser20. Positions Glu21–Arg41 are excised as a propeptide. 4 cysteine pairs are disulfide-bonded: Cys45–Cys60, Cys52–Cys69, Cys59–Cys85, and Cys71–Cys83.

The protein belongs to the neurotoxin 19 (CSTX) family. 02 (D7) subfamily. As to expression, expressed by the venom gland.

The protein resides in the secreted. The chain is Toxin-like structure LSTX-D8 from Lycosa singoriensis (Wolf spider).